The sequence spans 132 residues: NADPH-dependent 7-cyano-7-deazaguanine reductase (132 aa).

The Thioimide intermediate role is filled by Cys43. Asp50 serves as the catalytic Proton donor. Substrate-binding positions include 65-67 (VEL) and 84-85 (HE).

The protein belongs to the GTP cyclohydrolase I family. QueF type 1 subfamily.

It localises to the cytoplasm. The catalysed reaction is 7-aminomethyl-7-carbaguanine + 2 NADP(+) = 7-cyano-7-deazaguanine + 2 NADPH + 3 H(+). It functions in the pathway tRNA modification; tRNA-queuosine biosynthesis. Functionally, catalyzes the NADPH-dependent reduction of 7-cyano-7-deazaguanine (preQ0) to 7-aminomethyl-7-deazaguanine (preQ1). This Thermosynechococcus vestitus (strain NIES-2133 / IAM M-273 / BP-1) protein is NADPH-dependent 7-cyano-7-deazaguanine reductase.